We begin with the raw amino-acid sequence, 782 residues long: U-box domain-containing protein 7 (782 aa).

Residues 271-345 (VPPEELRCPI…ASWCEQNGTQ (75 aa)) form the U-box domain. 5 ARM repeats span residues 456 to 499 (EEAR…NLAV), 502 to 541 (NRNK…SCLD), 542 to 581 (EAKS…NLST), 583 to 623 (SPNI…NLAS), and 626 to 665 (EGKD…ILCN). A compositionally biased stretch (basic and acidic residues) spans 707 to 729 (EERQQRDQPSSNRDEPPQKEPAR). The segment at 707-765 (EERQQRDQPSSNRDEPPQKEPARKSLSAPLSVHGSTPASASVQDYEPRVLSKSMSRRKS) is disordered. Positions 739 to 748 (HGSTPASASV) are enriched in polar residues.

It carries out the reaction S-ubiquitinyl-[E2 ubiquitin-conjugating enzyme]-L-cysteine + [acceptor protein]-L-lysine = [E2 ubiquitin-conjugating enzyme]-L-cysteine + N(6)-ubiquitinyl-[acceptor protein]-L-lysine.. It participates in protein modification; protein ubiquitination. Functions as an E3 ubiquitin ligase. The chain is U-box domain-containing protein 7 (PUB7) from Arabidopsis thaliana (Mouse-ear cress).